We begin with the raw amino-acid sequence, 460 residues long: Glycine--tRNA ligase (460 aa).

Substrate is bound by residues R99 and E162. ATP-binding positions include 194–196 (RNE), 204–209 (FRTREF), 281–282 (EL), and 325–328 (GVGR). 209–213 (FEQME) is a binding site for substrate. 321–325 (EPAAG) is a binding site for substrate.

Belongs to the class-II aminoacyl-tRNA synthetase family. As to quaternary structure, homodimer.

The protein resides in the cytoplasm. It carries out the reaction tRNA(Gly) + glycine + ATP = glycyl-tRNA(Gly) + AMP + diphosphate. In terms of biological role, catalyzes the attachment of glycine to tRNA(Gly). This chain is Glycine--tRNA ligase, found in Streptomyces coelicolor (strain ATCC BAA-471 / A3(2) / M145).